The following is a 255-amino-acid chain: 5'-nucleotidase SurE (255 aa).

The a divalent metal cation site is built by D8, D9, S39, and N91.

The protein belongs to the SurE nucleotidase family. The cofactor is a divalent metal cation.

It is found in the cytoplasm. The catalysed reaction is a ribonucleoside 5'-phosphate + H2O = a ribonucleoside + phosphate. In terms of biological role, nucleotidase that shows phosphatase activity on nucleoside 5'-monophosphates. The polypeptide is 5'-nucleotidase SurE (Acinetobacter baumannii (strain ATCC 17978 / DSM 105126 / CIP 53.77 / LMG 1025 / NCDC KC755 / 5377)).